We begin with the raw amino-acid sequence, 122 residues long: Large ribosomal subunit protein uL14 (122 aa).

It belongs to the universal ribosomal protein uL14 family. Part of the 50S ribosomal subunit. Forms a cluster with proteins L3 and L19. In the 70S ribosome, L14 and L19 interact and together make contacts with the 16S rRNA in bridges B5 and B8.

Its function is as follows. Binds to 23S rRNA. Forms part of two intersubunit bridges in the 70S ribosome. The polypeptide is Large ribosomal subunit protein uL14 (Staphylococcus carnosus (strain TM300)).